The chain runs to 251 residues: Orcokinin peptides type A (251 aa).

Residues 1–20 (MTAQMFTIALLLSLSAIAAA) form the signal peptide. Propeptides lie at residues 21–46 (GTIK…GAPV), 225–231 (DYDVFPD), and 249–251 (NVE).

It belongs to the orcokinin family.

The protein localises to the secreted. Functionally, myotropic peptides that enhance both the frequency and amplitude of spontaneous hindgut contractions. This is Orcokinin peptides type A from Procambarus clarkii (Red swamp crayfish).